Here is a 591-residue protein sequence, read N- to C-terminus: V-type ATP synthase alpha chain (591 aa).

233-240 (GPFGAGKT) is a binding site for ATP.

It belongs to the ATPase alpha/beta chains family.

It carries out the reaction ATP + H2O + 4 H(+)(in) = ADP + phosphate + 5 H(+)(out). Functionally, produces ATP from ADP in the presence of a proton gradient across the membrane. The V-type alpha chain is a catalytic subunit. The protein is V-type ATP synthase alpha chain of Streptococcus pyogenes serotype M3 (strain ATCC BAA-595 / MGAS315).